A 533-amino-acid chain; its full sequence is Kelch-like protein 33 (533 aa).

6 Kelch repeats span residues 210 to 258 (ALVV…ALPA), 273 to 322 (ELYV…ALDG), 323 to 369 (KLYA…ILEG), 371 to 418 (LYVS…ALGG), 419 to 465 (RLYV…VLQG), and 467 to 514 (LLVL…ILTL).

The protein is Kelch-like protein 33 (KLHL33) of Homo sapiens (Human).